A 992-amino-acid polypeptide reads, in one-letter code: Exportin-T (992 aa).

It belongs to the exportin family.

It localises to the nucleus. Its subcellular location is the cytoplasm. Functionally, tRNA nucleus export receptor which facilitates tRNA translocation across the nuclear pore complex. Involved in pre-tRNA splicing, probably by affecting the interaction of pre-tRNA with splicing endonuclease. The polypeptide is Exportin-T (LOS1) (Scheffersomyces stipitis (strain ATCC 58785 / CBS 6054 / NBRC 10063 / NRRL Y-11545) (Yeast)).